Reading from the N-terminus, the 41-residue chain is Photosystem I reaction center subunit IX (41 aa).

The helical transmembrane segment at 7–27 (YLSTAPVITAIWLGITAGILI) threads the bilayer.

Belongs to the PsaJ family.

The protein localises to the cellular thylakoid membrane. May help in the organization of the PsaE and PsaF subunits. The sequence is that of Photosystem I reaction center subunit IX from Cyanothece sp. (strain PCC 7425 / ATCC 29141).